Consider the following 727-residue polypeptide: MDQKSDSAGKCPVAHTAPRGRSNRDWWPDQLDVQVLHRHSGLSDPLGNTFNYAEEFKKLDLDALKRDLRALMTDSQDWWPADFGHYGGLFIRMAWHSAGTYRITDGRGGAGQGQQRFAPLNSWPDNANLDKARRLLWPIKQKYGNRISWADLLILTGNVALESMGFKTFGFAGGRVDVWEPEELFWGPEGTWLGDERYSGERQLSEPLAAVQMGLIYVNPEGPNGNPDPVAAARDIRETFARMAMNDEETVALIAGGHTFGKTHGAGDPSFIGADPEGGAIEDQGLGWKSTFGTGVGKDAITGGPEVTWSQTPTRWSNHFFENLFNHEWELTKSPAGAYQWKAKNAEATIPDAYDPSRKHVPTRLTTDLSLRFDPAYEKISRRFLENPDEFADAFARAWFKLTHRDMGPKVRYLGPEVPAEDLIWQDVIPAVDHRLVDETDIAGLKAKIIASGLSVQELVSTAWASASTFRGSDKRGGANGARIRLAPQKDWEVNRPAQLARVLSVLEGIQRDFNAAQTDGKKISLADLIVLAGGAAVEKAAKAGGHDITVPFTPGRMDASEAQTDAASFAALEPRADGFRNYVSTTRQQFMKPEEALVDRAQLLTLTAPEMTVLVGGLRVLKAGEPKHGVFTSRPEALTNDFFVNLLDMGTQWSPIEGEEGVYEGRDRRTGAARWTGTRVDLIFGSHSQLRAFAEVYAQSDAREKFVKDFVAAWTKVMNADRFDLV.

Residues 1–24 are disordered; sequence MDQKSDSAGKCPVAHTAPRGRSNR. The segment at residues 95-217 is a cross-link (tryptophyl-tyrosyl-methioninium (Trp-Tyr) (with M-243)); that stretch reads WHSAGTYRIT…LAAVQMGLIY (123 aa). H96 (proton acceptor) is an active-site residue. The tryptophyl-tyrosyl-methioninium (Tyr-Met) (with W-95) cross-link spans 217–243; that stretch reads YVNPEGPNGNPDPVAAARDIRETFARM. H258 contributes to the heme b binding site.

Belongs to the peroxidase family. Peroxidase/catalase subfamily. Homodimer or homotetramer. It depends on heme b as a cofactor. Formation of the three residue Trp-Tyr-Met cross-link is important for the catalase, but not the peroxidase activity of the enzyme.

The enzyme catalyses H2O2 + AH2 = A + 2 H2O. It catalyses the reaction 2 H2O2 = O2 + 2 H2O. Its function is as follows. Bifunctional enzyme with both catalase and broad-spectrum peroxidase activity. The protein is Catalase-peroxidase of Rhizobium meliloti (strain 1021) (Ensifer meliloti).